The chain runs to 840 residues: MRAWGWVRNKFSSEDDYNDGASNKDYPDRFNEFDNSQNDHNDYTQNNAQFQNAQTTTFGRTISRVKAYYEIPEDDELDELASIPQWFKKNVTSNIFKNFLHYLKSLFPIIEWLPNYNPYWLINDLIAGITVGCVVVPQGMSYAKVATLPSEYGLYSSFVGVAIYCFFATSKDVSIGPVAVMSLITAKVIANVMAKDETYTAPQIATCLALLAGAITCGIGLLRLGFIIEFIPVPAVAGFTTGSALNILSGQVPALMGYKNKVTAKATYMVIIQSLKHLPDTTVDAAFGLVSLFILFFTKYMCQYLGKRYPRWQQAFFLTNTLRSAVVVIVGTAISYAICKHHRSDPPISIIKTVPRGFQHVGVPLITKKLCRDLASELPVSVIVLLLEHISIAKSFGRVNDYRIVPDQELIAMGVTNLIGIFFNAYPATGSFSRSAIKAKAGVKTPIAGIFTAAVVILSLYCLTDAFYYIPNAILSAVIIHAVTDLILPMKQTILFWRLQPLEACIFFISVIVSVFSSIENGIYVSVCLAAALLLLRIAKPHGSFLGKIQAANKYGSDNIANVRDIYVPLEMKEENPNLEIQSPPPGVFIFRLQESFTYPNASRVSTMISRRIKDLTRRGIDNIYVKDIDRPWNVPRQRKKKENSEIEDLRPLLQAIIFDFSAVNNLDTTAVQSLIDIRKELEIYANETVEFHFTNIRSGWIKRTLVAAGFGKPKGHAVDASVCVEVAAPLRDANLSAESSRNLSRIITPIYDDEEGNVSGHIYELDGKNNSDLSMHCQKGSNQVEIEFVEFNSRKYPFFHVDVASAVVDLQHRLLSPQKSDSFGSLKEGGTTTIKKIEN.

12 helical membrane passes run 120-140 (WLINDLIAGITVGCVVVPQGM), 148-168 (LPSEYGLYSSFVGVAIYCFFA), 173-193 (VSIGPVAVMSLITAKVIANVM), 208-228 (LALLAGAITCGIGLLRLGFII), 230-250 (FIPVPAVAGFTTGSALNILSG), 278-298 (LPDTTVDAAFGLVSLFILFFT), 315-335 (AFFLTNTLRSAVVVIVGTAIS), 410-430 (LIAMGVTNLIGIFFNAYPATG), 447-467 (IAGIFTAAVVILSLYCLTDAF), 470-490 (IPNAILSAVIIHAVTDLILPM), 505-525 (CIFFISVIVSVFSSIENGIYV), and 527-547 (VCLAAALLLLRIAKPHGSFLG). Residues 578–733 (NLEIQSPPPG…CVEVAAPLRD (156 aa)) enclose the STAS domain. Ser-823 bears the Phosphoserine mark.

The protein belongs to the SLC26A/SulP transporter (TC 2.A.53) family.

The protein localises to the membrane. High affinity uptake of sulfate into the cell. This is Probable sulfate permease C869.05c from Schizosaccharomyces pombe (strain 972 / ATCC 24843) (Fission yeast).